The primary structure comprises 504 residues: Crh-like protein CRH12 (504 aa).

An N-terminal signal peptide occupies residues 1–18 (MYKQILTFLILFLRYILS). The GH16 domain occupies 19 to 270 (EFPDDPYEDD…YSKALTYSYG (252 aa)). An N-linked (GlcNAc...) asparagine glycan is attached at N34. A disulfide bridge links C43 with C51. The Nucleophile role is filled by E138. The active-site Proton donor is the E143. E143 is a binding site for chitin. A glycan (N-linked (GlcNAc...) asparagine) is linked at N161. Chitin is bound by residues K221, W225, and T234. Residues 304–404 (KPTPKQETDD…LDISTQLPPL (101 aa)) form a disordered region. Over residues 316–329 (VLTSSKSQRVATTI) the composition is skewed to polar residues. The span at 356–378 (WETEQDETGTDDTENSDNEEEES) shows a compositional bias: acidic residues. N407, N416, and N425 each carry an N-linked (GlcNAc...) asparagine glycan. A lipid anchor (GPI-anchor amidated glycine) is attached at G479. Positions 480 to 504 (VSSILATSFSSVVIAEILVIVVLLL) are cleaved as a propeptide — removed in mature form.

This sequence belongs to the glycosyl hydrolase 16 family. CRH1 subfamily. Post-translationally, the GPI-anchor is attached to the protein in the endoplasmic reticulum and serves to target the protein to the cell surface. There, the glucosamine-inositol phospholipid moiety is cleaved off and the GPI-modified mannoprotein is covalently attached via its lipidless GPI glycan remnant to the 1,6-beta-glucan of the outer cell wall layer.

The protein localises to the secreted. Its subcellular location is the cell wall. The protein resides in the membrane. It carries out the reaction Random endo-hydrolysis of N-acetyl-beta-D-glucosaminide (1-&gt;4)-beta-linkages in chitin and chitodextrins.. Dual chitinase/transglycosylase that plays a role in cell wall architecture. Chitinase and transglycosylase activities are coupled. Required for the polysaccharide cross-linking at the septa and the cell wall. More specifically, transfers chitin to 1,6-beta-glucan in the cell wall. Plays an important role in fungal pathogenesis via its functions in cell wall assembly and regeneration, filamentation, and adherence to host cells. This is Crh-like protein CRH12 (CRH12) from Candida albicans (strain SC5314 / ATCC MYA-2876) (Yeast).